Reading from the N-terminus, the 273-residue chain is Karrikin insensitive 2 receptor B (273 aa).

The active-site Nucleophile is Ser95. The active site involves Asp217.

It belongs to the AB hydrolase superfamily. As to expression, expressed in stigma.

It localises to the nucleus. The protein resides in the cytoplasm. May be involved in plant olfaction during volatile communication. The chain is Karrikin insensitive 2 receptor B from Petunia hybrida (Petunia).